Reading from the N-terminus, the 325-residue chain is Putative carboxypeptidase YocD (325 aa).

The Nucleophile role is filled by Ser-111. Catalysis depends on charge relay system residues Glu-228 and His-296.

It belongs to the peptidase S66 family.

The chain is Putative carboxypeptidase YocD (yocD) from Bacillus subtilis (strain 168).